The chain runs to 270 residues: Shikimate dehydrogenase (NADP(+)) (270 aa).

Residues 14-16 and T61 each bind shikimate; that span reads SKS. Catalysis depends on K65, which acts as the Proton acceptor. Residues N86 and D101 each contribute to the shikimate site. Residues 126–130, 150–155, and M213 contribute to the NADP(+) site; these read GAGGA and NRTVSK. Residue Y215 coordinates shikimate. G237 lines the NADP(+) pocket.

Belongs to the shikimate dehydrogenase family. In terms of assembly, homodimer.

The catalysed reaction is shikimate + NADP(+) = 3-dehydroshikimate + NADPH + H(+). Its pathway is metabolic intermediate biosynthesis; chorismate biosynthesis; chorismate from D-erythrose 4-phosphate and phosphoenolpyruvate: step 4/7. Involved in the biosynthesis of the chorismate, which leads to the biosynthesis of aromatic amino acids. Catalyzes the reversible NADPH linked reduction of 3-dehydroshikimate (DHSA) to yield shikimate (SA). The chain is Shikimate dehydrogenase (NADP(+)) from Hahella chejuensis (strain KCTC 2396).